We begin with the raw amino-acid sequence, 208 residues long: Probable GTP-binding protein EngB (208 aa).

Residues 18-187 (KQFEICVIGR…FALMKKVVIE (170 aa)) enclose the EngB-type G domain. Residues 26-33 (GRSNVGKS), 52-56 (GRTQL), 69-72 (DLPG), 135-138 (NKVD), and 166-168 (VSA) contribute to the GTP site. Residues Ser33 and Thr54 each coordinate Mg(2+).

Belongs to the TRAFAC class TrmE-Era-EngA-EngB-Septin-like GTPase superfamily. EngB GTPase family. It depends on Mg(2+) as a cofactor.

In terms of biological role, necessary for normal cell division and for the maintenance of normal septation. The sequence is that of Probable GTP-binding protein EngB from Ureaplasma urealyticum serovar 10 (strain ATCC 33699 / Western).